A 595-amino-acid chain; its full sequence is MSLFRTYVRVLSYLNQEKNAFLLICTANITLAIITIAEPILFGHVIDTIADKSDTLVTLAVWMCFGISNIIAYVLVARGADRLAHRCRLTVLEKSFARIISMPLIWHQQRGTSHALHTLLRATDSMSSIWLEFMRQHLSTFVALFVLVPVTFKMNWRLSIVLMVLAILYILIARLVMQKTKNGQAAVEHYHHNLFKHITDSISNVSIVQSYNRITEETSALHQHTNNLLSAQTPVLNWWALASGLNRMASTISIVCVLLLGAFFVIKGQLSVGEVVTFVGFSQLMIGRLDQISGFINLAVSSQAKLQEFFDMEDSTFQTNEPANLPSLPNVKGAIQFHHVTYEFPNSSQGVFDISFEVKAGQTVAIVGPTGAGKTTLINLLQRVYDPTVGYISIDGININSINRESLRKALATVFQDAGLFDRTIRDNISIGKTGATDEELYEATKTASAHDFILKKSKNYDTLVGERGSQLSGGERQRLAIARAILKNAPILILDEATSALDVETEIRVKNAIDCISQNRTTFIIAHRLSTIRNADLVLFLDQGRLIEKGSFQELINKDGHFYKLLKRGGLTINQPATKEKDDNIIPLRKAMAL.

A run of 5 helical transmembrane segments spans residues 21 to 41 (FLLICTANITLAIITIAEPIL), 56 to 76 (LVTLAVWMCFGISNIIAYVLV), 129 to 149 (IWLEFMRQHLSTFVALFVLVP), 158 to 178 (LSIVLMVLAILYILIARLVMQ), and 252 to 272 (ISIVCVLLLGAFFVIKGQLSV). In terms of domain architecture, ABC transmembrane type-1 spans 21 to 301 (FLLICTANIT…ISGFINLAVS (281 aa)). In terms of domain architecture, ABC transporter spans 335 to 569 (IQFHHVTYEF…DGHFYKLLKR (235 aa)). Position 368–375 (368–375 (GPTGAGKT)) interacts with ATP.

The protein belongs to the ABC transporter superfamily. Beta-(1--&gt;2)glucan exporter (TC 3.A.1.108.1) family. In terms of assembly, homodimer.

It is found in the cell inner membrane. It catalyses the reaction [(1-&gt;2)-beta-D-glucosyl](n)(in) + ATP + H2O = [(1-&gt;2)-beta-D-glucosyl](n)(out) + ADP + phosphate + H(+). Its function is as follows. Involved in beta-(1--&gt;2)glucan export. Transmembrane domains (TMD) form a pore in the inner membrane and the ATP-binding domain (NBD) is responsible for energy generation. The polypeptide is Beta-(1--&gt;2)glucan export ATP-binding/permease protein NdvA (Bartonella bacilliformis).